The following is a 320-amino-acid chain: Iminosuccinate reductase (320 aa).

K67 serves as the catalytic Proton donor/acceptor. NAD(+) is bound by residues R110, 137 to 138 (HQ), N159, S199, 219 to 222 (MGTD), K226, and G291.

This sequence belongs to the ornithine cyclodeaminase/mu-crystallin family. BhcD subfamily.

The enzyme catalyses L-aspartate + NAD(+) = iminosuccinate + NADH + H(+). In terms of biological role, imine reductase that catalyzes the NADH-dependent reduction of iminosuccinate to L-aspartate. Is essential for the growth of P.denitrificans in the presence of glycolate and glyoxylate since it functions in glyoxylate assimilation via the beta-hydroxyaspartate cycle (BHAC). Thereby BhcD regenerates the amino group donor for the first step of the BHAC. The chain is Iminosuccinate reductase from Paracoccus denitrificans (strain Pd 1222).